Reading from the N-terminus, the 412-residue chain is Gamma-glutamyl phosphate reductase (412 aa).

Belongs to the gamma-glutamyl phosphate reductase family.

It is found in the cytoplasm. It catalyses the reaction L-glutamate 5-semialdehyde + phosphate + NADP(+) = L-glutamyl 5-phosphate + NADPH + H(+). It participates in amino-acid biosynthesis; L-proline biosynthesis; L-glutamate 5-semialdehyde from L-glutamate: step 2/2. Functionally, catalyzes the NADPH-dependent reduction of L-glutamate 5-phosphate into L-glutamate 5-semialdehyde and phosphate. The product spontaneously undergoes cyclization to form 1-pyrroline-5-carboxylate. The sequence is that of Gamma-glutamyl phosphate reductase from Aliarcobacter butzleri (strain RM4018) (Arcobacter butzleri).